A 734-amino-acid chain; its full sequence is ATP-dependent RNA helicase SUV3L, mitochondrial (734 aa).

The transit peptide at 1–60 directs the protein to the mitochondrion; sequence MAAAAAIAAALLRRSTSSQHHRRILLLPLLSHLQRAAPRSPSPWDPPPHHRFFFSSDVTA. Positions 58–88 are disordered; the sequence is VTAEGDSKPRPPLDGKQLWREVSTSEPATGA. Positions 62-76 are enriched in basic and acidic residues; it reads GDSKPRPPLDGKQLW. In terms of domain architecture, Helicase ATP-binding spans 198–356; that stretch reads FARAMRRRVV…RFKPLVVEAK (159 aa). Residue 211–218 coordinates ATP; it reads GPTNSGKT. Positions 357–525 constitute a Helicase C-terminal domain; the sequence is TLLGDLKNVR…SFAIQFPDLT (169 aa). N-linked (GlcNAc...) asparagine glycans are attached at residues asparagine 594 and asparagine 614. The tract at residues 667–734 is disordered; that stretch reads ASWKPTSRQQ…QDPSSLNFVA (68 aa). A compositionally biased stretch (acidic residues) spans 684–693; that stretch reads EEDNDVEQAS. The span at 695 to 709 shows a compositional bias: basic and acidic residues; sequence DNAKNDSEDGYERSI. A glycan (N-linked (GlcNAc...) asparagine) is linked at asparagine 699. Polar residues predominate over residues 725 to 734; sequence QDPSSLNFVA.

This sequence belongs to the helicase family. As to quaternary structure, homodimer; in free form. Component of the mitochondrial degradosome (mtEXO) complex which is a heteropentamer containing 2 copies of SUPV3L1 and 3 copies of PNPT1. Mg(2+) is required as a cofactor. The cofactor is Mn(2+).

It is found in the nucleus. The protein resides in the mitochondrion matrix. Its subcellular location is the mitochondrion nucleoid. The catalysed reaction is ATP + H2O = ADP + phosphate + H(+). Its function is as follows. Major helicase player in mitochondrial RNA metabolism. Component of the mitochondrial degradosome (mtEXO) complex, that degrades 3' overhang double-stranded RNA with a 3'-to-5' directionality in an ATP-dependent manner. ATPase and ATP-dependent multisubstrate helicase, able to unwind double-stranded (ds) DNA and RNA, and RNA/DNA heteroduplexes in the 5'-to-3' direction. Plays a role in the RNA surveillance system in mitochondria; regulates the stability of mature mRNAs, the removal of aberrantly formed mRNAs and the rapid degradation of non coding processing intermediates. Confers salinity and drought stress tolerances by maintaining both photosynthesis and antioxidant machinery, probably via an increase in plant hormones levels such as gibberellic acid (GA(3)), the cytokinin zeatin (Z) and indole-3-acetic acid (IAA). This Oryza sativa subsp. japonica (Rice) protein is ATP-dependent RNA helicase SUV3L, mitochondrial.